A 210-amino-acid chain; its full sequence is Ribosomal RNA large subunit methyltransferase E (210 aa).

S-adenosyl-L-methionine-binding residues include Gly-64, Trp-66, Asp-84, Asp-100, and Asp-125. The active-site Proton acceptor is the Lys-165.

Belongs to the class I-like SAM-binding methyltransferase superfamily. RNA methyltransferase RlmE family.

Its subcellular location is the cytoplasm. The enzyme catalyses uridine(2552) in 23S rRNA + S-adenosyl-L-methionine = 2'-O-methyluridine(2552) in 23S rRNA + S-adenosyl-L-homocysteine + H(+). Specifically methylates the uridine in position 2552 of 23S rRNA at the 2'-O position of the ribose in the fully assembled 50S ribosomal subunit. In Chromohalobacter salexigens (strain ATCC BAA-138 / DSM 3043 / CIP 106854 / NCIMB 13768 / 1H11), this protein is Ribosomal RNA large subunit methyltransferase E.